The sequence spans 223 residues: Thiamine-phosphate synthase (223 aa).

Residues 37-41 (QFREK) and aspartate 72 each bind 4-amino-2-methyl-5-(diphosphooxymethyl)pyrimidine. Residues aspartate 73 and aspartate 92 each contribute to the Mg(2+) site. Serine 110 serves as a coordination point for 4-amino-2-methyl-5-(diphosphooxymethyl)pyrimidine. 136-138 (TQS) provides a ligand contact to 2-[(2R,5Z)-2-carboxy-4-methylthiazol-5(2H)-ylidene]ethyl phosphate. Lysine 139 is a binding site for 4-amino-2-methyl-5-(diphosphooxymethyl)pyrimidine. Residues glycine 168 and 188–189 (IS) contribute to the 2-[(2R,5Z)-2-carboxy-4-methylthiazol-5(2H)-ylidene]ethyl phosphate site.

The protein belongs to the thiamine-phosphate synthase family. The cofactor is Mg(2+).

The enzyme catalyses 2-[(2R,5Z)-2-carboxy-4-methylthiazol-5(2H)-ylidene]ethyl phosphate + 4-amino-2-methyl-5-(diphosphooxymethyl)pyrimidine + 2 H(+) = thiamine phosphate + CO2 + diphosphate. It catalyses the reaction 2-(2-carboxy-4-methylthiazol-5-yl)ethyl phosphate + 4-amino-2-methyl-5-(diphosphooxymethyl)pyrimidine + 2 H(+) = thiamine phosphate + CO2 + diphosphate. The catalysed reaction is 4-methyl-5-(2-phosphooxyethyl)-thiazole + 4-amino-2-methyl-5-(diphosphooxymethyl)pyrimidine + H(+) = thiamine phosphate + diphosphate. Its pathway is cofactor biosynthesis; thiamine diphosphate biosynthesis; thiamine phosphate from 4-amino-2-methyl-5-diphosphomethylpyrimidine and 4-methyl-5-(2-phosphoethyl)-thiazole: step 1/1. In terms of biological role, condenses 4-methyl-5-(beta-hydroxyethyl)thiazole monophosphate (THZ-P) and 2-methyl-4-amino-5-hydroxymethyl pyrimidine pyrophosphate (HMP-PP) to form thiamine monophosphate (TMP). The chain is Thiamine-phosphate synthase from Streptococcus agalactiae serotype Ia (strain ATCC 27591 / A909 / CDC SS700).